Consider the following 27-residue polypeptide: Pregnancy-associated glycoprotein 59 (27 aa).

The protein belongs to the peptidase A1 family. In terms of processing, glycosylated. Placenta.

In Capra hircus (Goat), this protein is Pregnancy-associated glycoprotein 59 (PAG59).